Consider the following 464-residue polypeptide: ATP synthase subunit beta (464 aa).

152-159 (GGAGVGKT) is a binding site for ATP.

It belongs to the ATPase alpha/beta chains family. In terms of assembly, F-type ATPases have 2 components, CF(1) - the catalytic core - and CF(0) - the membrane proton channel. CF(1) has five subunits: alpha(3), beta(3), gamma(1), delta(1), epsilon(1). CF(0) has three main subunits: a(1), b(2) and c(9-12). The alpha and beta chains form an alternating ring which encloses part of the gamma chain. CF(1) is attached to CF(0) by a central stalk formed by the gamma and epsilon chains, while a peripheral stalk is formed by the delta and b chains.

It localises to the cell membrane. The enzyme catalyses ATP + H2O + 4 H(+)(in) = ADP + phosphate + 5 H(+)(out). Produces ATP from ADP in the presence of a proton gradient across the membrane. The catalytic sites are hosted primarily by the beta subunits. This chain is ATP synthase subunit beta, found in Clostridioides difficile (strain 630) (Peptoclostridium difficile).